Here is a 741-residue protein sequence, read N- to C-terminus: Subtilisin-like protease SBT4.4 (741 aa).

The first 24 residues, 1 to 24 (MAKGTTFIFLFSSLLVLSLSSVSA), serve as a signal peptide directing secretion. The propeptide at 25-112 (DKDDHGDQQV…VFPSRKLKLQ (88 aa)) is activation peptide. An Inhibitor I9 domain is found at 34–111 (VYIVYLGSLP…SVFPSRKLKL (78 aa)). The 474-residue stretch at 116-589 (SWNFMGLKEG…SGHVDPIDAI (474 aa)) folds into the Peptidase S8 domain. Asp-144 functions as the Charge relay system in the catalytic mechanism. Residues Asn-175 and Asn-195 are each glycosylated (N-linked (GlcNAc...) asparagine). The active-site Charge relay system is the His-204. 2 N-linked (GlcNAc...) asparagine glycosylation sites follow: Asn-227 and Asn-357. A PA domain is found at 359 to 445 (TNYPLVYGKS…LSNDDYKSLV (87 aa)). Asn-449 carries N-linked (GlcNAc...) asparagine glycosylation. Ser-528 serves as the catalytic Charge relay system. N-linked (GlcNAc...) asparagine glycosylation is found at Asn-565, Asn-610, Asn-623, and Asn-654.

This sequence belongs to the peptidase S8 family. The C-terminal propeptide is autocleaved.

Its subcellular location is the secreted. This chain is Subtilisin-like protease SBT4.4, found in Arabidopsis thaliana (Mouse-ear cress).